The sequence spans 197 residues: Pyridoxal 5'-phosphate synthase subunit PdxT (197 aa).

An L-glutamine-binding site is contributed by G52–S54. Residue C84 is the Nucleophile of the active site. L-glutamine is bound by residues R111 and I139 to R140. Catalysis depends on charge relay system residues H175 and E177.

Belongs to the glutaminase PdxT/SNO family. In terms of assembly, in the presence of PdxS, forms a dodecamer of heterodimers. Only shows activity in the heterodimer.

It carries out the reaction aldehydo-D-ribose 5-phosphate + D-glyceraldehyde 3-phosphate + L-glutamine = pyridoxal 5'-phosphate + L-glutamate + phosphate + 3 H2O + H(+). The catalysed reaction is L-glutamine + H2O = L-glutamate + NH4(+). Its pathway is cofactor biosynthesis; pyridoxal 5'-phosphate biosynthesis. Functionally, catalyzes the hydrolysis of glutamine to glutamate and ammonia as part of the biosynthesis of pyridoxal 5'-phosphate. The resulting ammonia molecule is channeled to the active site of PdxS. The polypeptide is Pyridoxal 5'-phosphate synthase subunit PdxT (Halorubrum lacusprofundi (strain ATCC 49239 / DSM 5036 / JCM 8891 / ACAM 34)).